We begin with the raw amino-acid sequence, 303 residues long: Sulfate adenylyltransferase subunit 2 (303 aa).

It belongs to the PAPS reductase family. CysD subfamily. Heterodimer composed of CysD, the smaller subunit, and CysN.

The enzyme catalyses sulfate + ATP + H(+) = adenosine 5'-phosphosulfate + diphosphate. The protein operates within sulfur metabolism; hydrogen sulfide biosynthesis; sulfite from sulfate: step 1/3. Functionally, with CysN forms the ATP sulfurylase (ATPS) that catalyzes the adenylation of sulfate producing adenosine 5'-phosphosulfate (APS) and diphosphate, the first enzymatic step in sulfur assimilation pathway. APS synthesis involves the formation of a high-energy phosphoric-sulfuric acid anhydride bond driven by GTP hydrolysis by CysN coupled to ATP hydrolysis by CysD. This Akkermansia muciniphila (strain ATCC BAA-835 / DSM 22959 / JCM 33894 / BCRC 81048 / CCUG 64013 / CIP 107961 / Muc) protein is Sulfate adenylyltransferase subunit 2.